The sequence spans 288 residues: Killer cell lectin-like receptor 2 (288 aa).

At 1–45 (MSEQEVTYTTLRFHKSSGLQNPVRPEETQRPRDVGHRECSVPWKF) the chain is on the cytoplasmic side. Residues 46–66 (IVIVLGILCFLLLLTVAVLVI) form a helical; Signal-anchor for type II membrane protein membrane-spanning segment. Residues 67 to 288 (HIFRDGQEKH…SALQRDEDES (222 aa)) are Extracellular-facing. N-linked (GlcNAc...) asparagine glycans are attached at residues asparagine 94, asparagine 105, and asparagine 114. The C-type lectin domain maps to 144-263 (QVEGYWFCCG…THGCICEKRL (120 aa)). Disulfide bonds link cysteine 151/cysteine 156, cysteine 169/cysteine 257, cysteine 173/cysteine 259, and cysteine 238/cysteine 251. N-linked (GlcNAc...) asparagine glycosylation is present at asparagine 177.

As to quaternary structure, homodimer; disulfide-linked.

The protein localises to the membrane. In terms of biological role, receptor on natural killer (NK) cells for class I MHC. This is Killer cell lectin-like receptor 2 (Klra2) from Mus musculus (Mouse).